Reading from the N-terminus, the 142-residue chain is HTH-type transcriptional regulator MntR (142 aa).

The region spanning 1-63 is the HTH dtxR-type domain; that stretch reads MPTPSMEDYI…YEKYRGLILT (63 aa). Residues D8, E11, H77, E99, E102, and H103 each contribute to the Mn(2+) site.

This sequence belongs to the DtxR/MntR family. In terms of assembly, homodimer.

Its subcellular location is the cytoplasm. DNA binding is strongly activated by Mn(2+). In terms of biological role, central regulator of manganese homeostasis. The polypeptide is HTH-type transcriptional regulator MntR (Listeria welshimeri serovar 6b (strain ATCC 35897 / DSM 20650 / CCUG 15529 / CIP 8149 / NCTC 11857 / SLCC 5334 / V8)).